A 174-amino-acid chain; its full sequence is uncharacterized protein (174 aa).

Belongs to the IIV-6 196R family.

This is an uncharacterized protein from Acheta domesticus (House cricket).